The sequence spans 743 residues: Adhesion defective protein 2 (743 aa).

The interval 1–36 (MADPGLRSGVGLPSQQGQKHDLQKDQKQPHVNNADR) is disordered. A compositionally biased stretch (basic and acidic residues) spans 18–28 (QKHDLQKDQKQ). Positions 38 to 70 (TQSLLNSYIYDYLIKKDYCEAARAFGREAQVQT) constitute a LisH domain. 4 disordered regions span residues 79 to 127 (NSLA…PPPP), 264 to 361 (LQSV…QYPV), 379 to 426 (RNPH…YGFS), and 476 to 692 (KERK…KSSD). Ser-89 carries the post-translational modification Phosphoserine. Over residues 98 to 114 (ISNNESSDENMNVNNGN) the composition is skewed to polar residues. Over residues 264 to 281 (LQSVQQQQKQHQQKKTPQ) the composition is skewed to low complexity. Polar residues-rich tracts occupy residues 282–297 (SGSTPQMQNTTSQPTT), 315–353 (IPSSPKTEGAPSNAQFRPSLPATPNGSVPQSNPLYDTTG), 390–399 (PSSTLPQQQK), 408–426 (QQPSTGQFSGNQMNQYGFS), and 482–500 (TSASPDRPLSQTITESSVA). The span at 501 to 520 (KTKSTTPKSTDTPTEATTSP) shows a compositional bias: low complexity. Polar residues-rich tracts occupy residues 521–544 (VKVSTKNSNTTENLNGINESNMPM) and 556–566 (DHPSNYSNLIE). The segment covering 567 to 578 (NSSTSDTNNADN) has biased composition (low complexity). Over residues 586–602 (WQLQQTHSSRPTPNASS) the composition is skewed to polar residues. The span at 612–631 (PSSANSNAPTPAPTVNTTNP) shows a compositional bias: low complexity. Polar residues predominate over residues 661 to 670 (DNQNQSGKSN). Low complexity predominate over residues 671-688 (PDTSATPSAPTESTTVAT).

It belongs to the FLO8 family.

It localises to the cytoplasm. The protein resides in the nucleus. Its function is as follows. Probable transcriptional regulator involved in cell adhesion. The chain is Adhesion defective protein 2 (adn2) from Schizosaccharomyces pombe (strain 972 / ATCC 24843) (Fission yeast).